The primary structure comprises 511 residues: GMP synthase [glutamine-hydrolyzing] (511 aa).

Residues 3–193 (KILILDFGGQ…VYSICDVAGD (191 aa)) form the Glutamine amidotransferase type-1 domain. C80 serves as the catalytic Nucleophile. Catalysis depends on residues H167 and E169. The GMPS ATP-PPase domain maps to 194-384 (WEPKNIKLEK…LDIPYQNVYR (191 aa)). 221–227 (SGGVDSL) provides a ligand contact to ATP.

In terms of assembly, homodimer.

It carries out the reaction XMP + L-glutamine + ATP + H2O = GMP + L-glutamate + AMP + diphosphate + 2 H(+). Its pathway is purine metabolism; GMP biosynthesis; GMP from XMP (L-Gln route): step 1/1. Functionally, catalyzes the synthesis of GMP from XMP. This Malacoplasma penetrans (strain HF-2) (Mycoplasma penetrans) protein is GMP synthase [glutamine-hydrolyzing].